A 348-amino-acid chain; its full sequence is Putative methylthioribose-1-phosphate isomerase (348 aa).

Substrate-binding positions include Arg55 to Ala57, Arg98, and Gln203. The active-site Proton donor is Asp244. Asn253 to Lys254 contributes to the substrate binding site.

It belongs to the eIF-2B alpha/beta/delta subunits family. MtnA subfamily.

The enzyme catalyses 5-(methylsulfanyl)-alpha-D-ribose 1-phosphate = 5-(methylsulfanyl)-D-ribulose 1-phosphate. Catalyzes the interconversion of methylthioribose-1-phosphate (MTR-1-P) into methylthioribulose-1-phosphate (MTRu-1-P). The protein is Putative methylthioribose-1-phosphate isomerase of Methanosarcina acetivorans (strain ATCC 35395 / DSM 2834 / JCM 12185 / C2A).